A 71-amino-acid polypeptide reads, in one-letter code: Omega-conotoxin-like CnVIIF (71 aa).

3 disulfides stabilise this stretch: cysteine 46–cysteine 61, cysteine 53–cysteine 65, and cysteine 60–cysteine 70. Cysteine amide; in CnVIID is present on cysteine 70.

Belongs to the conotoxin M superfamily. As to expression, expressed by the venom duct.

It is found in the secreted. In terms of biological role, omega-conotoxins act at presynaptic membranes, they bind and block voltage-gated calcium channels (Cav). In Conus consors (Singed cone), this protein is Omega-conotoxin-like CnVIIF.